The primary structure comprises 303 residues: Thyrotroph embryonic factor (303 aa).

Disordered stretches follow at residues 1–63 (MSDA…KLEE) and 132–176 (ESAS…DPNC). Residue serine 32 is modified to Phosphoserine. Residues 41-61 (KLMENPPREARLDKEKGKEKL) show a composition bias toward basic and acidic residues. Residues 133 to 160 (SASSSTASPPSSSTAIFQPSETVSSTES) show a composition bias toward low complexity. In terms of domain architecture, bZIP spans 233-296 (DEKYWTRRKK…GKCKTIVSKY (64 aa)). Residues 235–255 (KYWTRRKKNNVAAKRSRDARR) are basic motif. The segment at 256-263 (LKENQITI) is leucine-zipper.

It belongs to the bZIP family. PAR subfamily. In terms of assembly, binds DNA as a homodimer or a heterodimer. Can form a heterodimer with DBP.

The protein localises to the nucleus. In terms of biological role, transcription factor that binds to and transactivates the TSHB promoter. Binds to a minimal DNA-binding sequence 5'-[TC][AG][AG]TTA[TC][AG]-3'. This chain is Thyrotroph embryonic factor (TEF), found in Homo sapiens (Human).